The chain runs to 465 residues: Tapasin (465 aa).

The N-terminal stretch at 1 to 23 (MKPLLLLVAVALGLATVVSVVSA) is a signal peptide. Residues 24-416 (GPEAIECWFV…GFSGPSIEDG (393 aa)) lie on the Lumenal side of the membrane. Cys-30 and Cys-94 form a disulfide bridge. A glycan (N-linked (GlcNAc...) asparagine) is linked at Asn-256. Residues 295-402 (PRVSLTPAPV…PASGRSADVT (108 aa)) form the Ig-like C1-type domain. The cysteines at positions 318 and 385 are disulfide-linked. Residues 417–437 (IGLFLSAFLLLGLLKVLGWLA) traverse the membrane as a helical segment. Residues 438–465 (AYWTIPEVSKEKATAASLTIPRNSKKSQ) lie on the Cytoplasmic side of the membrane.

Heterodimer with PDIA3; disulfide-linked. Obligatory mediator for the interaction between newly assembled MHC class I molecules, calreticulin, PDIA3 and TAP. Up to 4 MHC class I/tapasin complexes bind to 1 TAP. Interacts with HLA-G-B2M complex; this interaction is required for loading of high affinity peptides. On its own or as part of MHC class I peptide loading complex, interacts with ligand-free MR1 or MR1-B2M complex, providing for stable MR1 pools ready for metabolite antigen processing.

It localises to the endoplasmic reticulum membrane. Its function is as follows. Involved in the association of MHC class I with transporter associated with antigen processing (TAP) and in the assembly of MHC class I with peptide (peptide loading). In Mus musculus (Mouse), this protein is Tapasin (Tapbp).